The primary structure comprises 156 residues: Small ribosomal subunit protein uS7 (156 aa).

This sequence belongs to the universal ribosomal protein uS7 family. As to quaternary structure, part of the 30S ribosomal subunit. Contacts proteins S9 and S11.

Functionally, one of the primary rRNA binding proteins, it binds directly to 16S rRNA where it nucleates assembly of the head domain of the 30S subunit. Is located at the subunit interface close to the decoding center, probably blocks exit of the E-site tRNA. This chain is Small ribosomal subunit protein uS7, found in Streptococcus suis (strain 98HAH33).